The primary structure comprises 91 residues: Small ribosomal subunit protein uS15 (91 aa).

This sequence belongs to the universal ribosomal protein uS15 family. Part of the 30S ribosomal subunit. Forms a bridge to the 50S subunit in the 70S ribosome, contacting the 23S rRNA.

One of the primary rRNA binding proteins, it binds directly to 16S rRNA where it helps nucleate assembly of the platform of the 30S subunit by binding and bridging several RNA helices of the 16S rRNA. In terms of biological role, forms an intersubunit bridge (bridge B4) with the 23S rRNA of the 50S subunit in the ribosome. The chain is Small ribosomal subunit protein uS15 from Rickettsia prowazekii (strain Madrid E).